A 175-amino-acid chain; its full sequence is Co-chaperone protein HscB homolog (175 aa).

Positions 7–79 (SHFDLFHLPA…LQRASYLLSL (73 aa)) constitute a J domain.

Belongs to the HscB family. Interacts with HscA and stimulates its ATPase activity.

In terms of biological role, co-chaperone involved in the maturation of iron-sulfur cluster-containing proteins. Seems to help targeting proteins to be folded toward HscA. In Burkholderia vietnamiensis (strain G4 / LMG 22486) (Burkholderia cepacia (strain R1808)), this protein is Co-chaperone protein HscB homolog.